The primary structure comprises 198 residues: Phosphoheptose isomerase (198 aa).

Positions 36–198 constitute an SIS domain; the sequence is MARALGADRK…DRTLFGGPGG (163 aa). 51 to 53 provides a ligand contact to substrate; the sequence is NGG. H60 and E64 together coordinate Zn(2+). Residues E64, 93–94, 119–121, S124, and Q174 contribute to the substrate site; these read ND and STS. Zn(2+) is bound by residues Q174 and H182.

It belongs to the SIS family. GmhA subfamily. As to quaternary structure, homotetramer. It depends on Zn(2+) as a cofactor.

The protein localises to the cytoplasm. The catalysed reaction is 2 D-sedoheptulose 7-phosphate = D-glycero-alpha-D-manno-heptose 7-phosphate + D-glycero-beta-D-manno-heptose 7-phosphate. The protein operates within carbohydrate biosynthesis; D-glycero-D-manno-heptose 7-phosphate biosynthesis; D-glycero-alpha-D-manno-heptose 7-phosphate and D-glycero-beta-D-manno-heptose 7-phosphate from sedoheptulose 7-phosphate: step 1/1. Its function is as follows. Catalyzes the isomerization of sedoheptulose 7-phosphate in D-glycero-D-manno-heptose 7-phosphate. This is Phosphoheptose isomerase from Halorhodospira halophila (strain DSM 244 / SL1) (Ectothiorhodospira halophila (strain DSM 244 / SL1)).